The chain runs to 283 residues: Stage II sporulation protein Q (283 aa).

The helical transmembrane segment at 22 to 42 (WVFPAIYLVSAAVILTAVLWY) threads the bilayer. A disordered region spans residues 228 to 283 (EKAATQETEESIQQSSEKKDGSTEKGTEEKSGEKKDDSTDKSGSKESSTTEDTEQS). The span at 243 to 271 (SEKKDGSTEKGTEEKSGEKKDDSTDKSGS) shows a compositional bias: basic and acidic residues.

Interacts with SpoIIIAH and SpoIIE.

Its subcellular location is the forespore membrane. In terms of biological role, involved in forespore engulfment and required for anchoring membrane proteins on the forespore side of the septal membrane. Forms a channel with SpoIIIAH that is open on the forespore end and closed (or gated) on the mother cell end. This allows sigma-E-directed gene expression in the mother-cell compartment of the sporangium to trigger the activation of sigma-G forespore-specific gene expression by a pathway of intercellular signaling. This is Stage II sporulation protein Q (spoIIQ) from Bacillus subtilis (strain 168).